An 888-amino-acid polypeptide reads, in one-letter code: Patched domain-containing protein 1 (888 aa).

A helical transmembrane segment spans residues 20 to 40 (FIASHPVFFASAPVLISILLG). Asn77, Asn133, and Asn167 each carry an N-linked (GlcNAc...) asparagine glycan. One can recognise an SSD domain in the interval 268-427 (SERYLVTSLI…LSFYGSSLVF (160 aa)). Transmembrane regions (helical) follow at residues 273–293 (VTSLILVVTMAILCCSMQDCV) and 298–318 (WLGLLGLVTISLATLTAAGII). Asn319 and Asn326 each carry an N-linked (GlcNAc...) asparagine glycan. The next 4 helical transmembrane spans lie at 328–348 (TFLGVPFVMLGHGLYGTFEML), 373–393 (LSFSLTTAMYLVTFGIGASPF), 407–427 (CIAIFFNYLYVLSFYGSSLVF), and 502–522 (PFVVLFYLIYISFALMGYLQV). Residues Asn568, Asn599, and Asn608 are each glycosylated (N-linked (GlcNAc...) asparagine). Transmembrane regions (helical) follow at residues 707-727 (ALFLLFFSAFLVADSLINVWI) and 738-758 (VIGFMTLWKVELDCISVLCLI). Residue Asn762 is glycosylated (N-linked (GlcNAc...) asparagine). The chain crosses the membrane as a helical span at residues 795–815 (GVAILQSYLCYIVGLIPLAAV). Asn818 carries an N-linked (GlcNAc...) asparagine glycan. The chain crosses the membrane as a helical span at residues 826–846 (CLFLIAFVTFFHCFAILPVIL).

Belongs to the patched family. Widely expressed, including in various regions of the brain with highest expression in the gray and white cerebellum, followed by the cerebellar vermis and the pituitary gland.

Its subcellular location is the cell membrane. The protein resides in the cell projection. It localises to the dendritic spine. Required for the development and function of the thalamic reticular nucleus (TRN), a part of the thalamus that is critical for thalamocortical transmission, generation of sleep rhythms, sensorimotor processing and attention. Can bind cholesterol in vitro. This chain is Patched domain-containing protein 1, found in Homo sapiens (Human).